A 382-amino-acid chain; its full sequence is Fetuin-B (382 aa).

The signal sequence occupies residues Met1–Cys15. Cystatin fetuin-B-type domains are found at residues Ala25 to Thr138 and Met149 to Asp255. Residue Asn37 is glycosylated (N-linked (GlcNAc...) asparagine). Cystine bridges form between Cys93–Cys104, Cys117–Cys137, and Cys151–Cys154. N-linked (GlcNAc...) asparagine glycosylation occurs at Asn136. Asn182 carries an N-linked (GlcNAc...) asparagine glycan. Disulfide bonds link Cys216/Cys224 and Cys237/Cys254. Composition is skewed to polar residues over residues Pro262 to Thr276 and Gln286 to Pro295. 2 disordered regions span residues Pro262–Pro320 and Ala363–Pro382. Residues Thr289 and Thr292 are each glycosylated (O-linked (GalNAc...) threonine). Basic and acidic residues predominate over residues Leu310–Pro320. Residue Ser315 is modified to Phosphoserine.

The protein belongs to the fetuin family. As to expression, liver and testis.

Its subcellular location is the secreted. Its function is as follows. Protease inhibitor required for egg fertilization. Required to prevent premature zona pellucida hardening before fertilization, probably by inhibiting the protease activity of ASTL, a protease that mediates the cleavage of ZP2 and triggers zona pellucida hardening. In Homo sapiens (Human), this protein is Fetuin-B (FETUB).